Reading from the N-terminus, the 222-residue chain is Leucyl/phenylalanyl-tRNA--protein transferase (222 aa).

Belongs to the L/F-transferase family.

Its subcellular location is the cytoplasm. The enzyme catalyses N-terminal L-lysyl-[protein] + L-leucyl-tRNA(Leu) = N-terminal L-leucyl-L-lysyl-[protein] + tRNA(Leu) + H(+). The catalysed reaction is N-terminal L-arginyl-[protein] + L-leucyl-tRNA(Leu) = N-terminal L-leucyl-L-arginyl-[protein] + tRNA(Leu) + H(+). It catalyses the reaction L-phenylalanyl-tRNA(Phe) + an N-terminal L-alpha-aminoacyl-[protein] = an N-terminal L-phenylalanyl-L-alpha-aminoacyl-[protein] + tRNA(Phe). Functionally, functions in the N-end rule pathway of protein degradation where it conjugates Leu, Phe and, less efficiently, Met from aminoacyl-tRNAs to the N-termini of proteins containing an N-terminal arginine or lysine. The sequence is that of Leucyl/phenylalanyl-tRNA--protein transferase from Legionella pneumophila (strain Lens).